Reading from the N-terminus, the 272-residue chain is Putative hydro-lyase AZC_4080 (272 aa).

The protein belongs to the D-glutamate cyclase family.

This Azorhizobium caulinodans (strain ATCC 43989 / DSM 5975 / JCM 20966 / LMG 6465 / NBRC 14845 / NCIMB 13405 / ORS 571) protein is Putative hydro-lyase AZC_4080.